The sequence spans 443 residues: Tubulin beta-1/beta-2 chain (443 aa).

Residues Q11, E69, S138, G142, T143, G144, N204, and N226 each contribute to the GTP site. Position 69 (E69) interacts with Mg(2+). A disordered region spans residues 424 to 443 (QYQDASAEEEGEFEGEEEEA). Over residues 429-443 (SAEEEGEFEGEEEEA) the composition is skewed to acidic residues.

Belongs to the tubulin family. In terms of assembly, dimer of alpha and beta chains. A typical microtubule is a hollow water-filled tube with an outer diameter of 25 nm and an inner diameter of 15 nM. Alpha-beta heterodimers associate head-to-tail to form protofilaments running lengthwise along the microtubule wall with the beta-tubulin subunit facing the microtubule plus end conferring a structural polarity. Microtubules usually have 13 protofilaments but different protofilament numbers can be found in some organisms and specialized cells. Requires Mg(2+) as cofactor.

The protein localises to the cytoplasm. Its subcellular location is the cytoskeleton. In terms of biological role, tubulin is the major constituent of microtubules, a cylinder consisting of laterally associated linear protofilaments composed of alpha- and beta-tubulin heterodimers. Microtubules grow by the addition of GTP-tubulin dimers to the microtubule end, where a stabilizing cap forms. Below the cap, tubulin dimers are in GDP-bound state, owing to GTPase activity of alpha-tubulin. This chain is Tubulin beta-1/beta-2 chain (TUBB1), found in Chlamydomonas reinhardtii (Chlamydomonas smithii).